Here is a 463-residue protein sequence, read N- to C-terminus: Siroheme synthase (463 aa).

Residues 1–203 form a precorrin-2 dehydrogenase /sirohydrochlorin ferrochelatase region; sequence MDYLPLFHKL…GQGAEAERLL (203 aa). Residues 22–23 and 43–44 contribute to the NAD(+) site; these read EI and PD. A Phosphoserine modification is found at Ser128. A uroporphyrinogen-III C-methyltransferase region spans residues 216–463; it reads GEVYLVGAGP…LAWFEGSQNS (248 aa). Pro225 contacts S-adenosyl-L-methionine. Catalysis depends on Asp248, which acts as the Proton acceptor. The active-site Proton donor is Lys270. S-adenosyl-L-methionine-binding positions include 301 to 303, Ile306, 331 to 332, Met383, and Gly412; these read GGD and TA.

This sequence in the N-terminal section; belongs to the precorrin-2 dehydrogenase / sirohydrochlorin ferrochelatase family. The protein in the C-terminal section; belongs to the precorrin methyltransferase family.

It carries out the reaction uroporphyrinogen III + 2 S-adenosyl-L-methionine = precorrin-2 + 2 S-adenosyl-L-homocysteine + H(+). The catalysed reaction is precorrin-2 + NAD(+) = sirohydrochlorin + NADH + 2 H(+). The enzyme catalyses siroheme + 2 H(+) = sirohydrochlorin + Fe(2+). It participates in cofactor biosynthesis; adenosylcobalamin biosynthesis; precorrin-2 from uroporphyrinogen III: step 1/1. Its pathway is cofactor biosynthesis; adenosylcobalamin biosynthesis; sirohydrochlorin from precorrin-2: step 1/1. It functions in the pathway porphyrin-containing compound metabolism; siroheme biosynthesis; precorrin-2 from uroporphyrinogen III: step 1/1. The protein operates within porphyrin-containing compound metabolism; siroheme biosynthesis; siroheme from sirohydrochlorin: step 1/1. It participates in porphyrin-containing compound metabolism; siroheme biosynthesis; sirohydrochlorin from precorrin-2: step 1/1. In terms of biological role, multifunctional enzyme that catalyzes the SAM-dependent methylations of uroporphyrinogen III at position C-2 and C-7 to form precorrin-2 via precorrin-1. Then it catalyzes the NAD-dependent ring dehydrogenation of precorrin-2 to yield sirohydrochlorin. Finally, it catalyzes the ferrochelation of sirohydrochlorin to yield siroheme. This Pseudomonas putida (strain ATCC 700007 / DSM 6899 / JCM 31910 / BCRC 17059 / LMG 24140 / F1) protein is Siroheme synthase.